The following is a 146-amino-acid chain: 6-carboxy-5,6,7,8-tetrahydropterin synthase (146 aa).

Residue His27 coordinates Zn(2+). The Proton acceptor role is filled by Cys37. The Zn(2+) site is built by His41 and His43. Active-site charge relay system residues include His78 and Glu129.

It belongs to the PTPS family. QueD subfamily. As to quaternary structure, homotetramer. Zn(2+) is required as a cofactor.

It carries out the reaction 7,8-dihydroneopterin 3'-triphosphate + H2O = 6-carboxy-5,6,7,8-tetrahydropterin + triphosphate + acetaldehyde + 2 H(+). Its pathway is purine metabolism; 7-cyano-7-deazaguanine biosynthesis. In terms of biological role, catalyzes the conversion of 7,8-dihydroneopterin triphosphate (H2NTP) to 6-carboxy-5,6,7,8-tetrahydropterin (CPH4) and acetaldehyde. This is 6-carboxy-5,6,7,8-tetrahydropterin synthase (queD) from Bacillus subtilis (strain 168).